A 212-amino-acid chain; its full sequence is Peptide methionine sulfoxide reductase MsrA (212 aa).

Cys-52 is an active-site residue.

Belongs to the MsrA Met sulfoxide reductase family.

The catalysed reaction is L-methionyl-[protein] + [thioredoxin]-disulfide + H2O = L-methionyl-(S)-S-oxide-[protein] + [thioredoxin]-dithiol. It carries out the reaction [thioredoxin]-disulfide + L-methionine + H2O = L-methionine (S)-S-oxide + [thioredoxin]-dithiol. Has an important function as a repair enzyme for proteins that have been inactivated by oxidation. Catalyzes the reversible oxidation-reduction of methionine sulfoxide in proteins to methionine. The sequence is that of Peptide methionine sulfoxide reductase MsrA from Escherichia coli O127:H6 (strain E2348/69 / EPEC).